The primary structure comprises 212 residues: Large ribosomal subunit protein uL3 (212 aa).

The disordered stretch occupies residues 129-156; the sequence is RRGPMGHGSKNHRAPGSTGAGTTPGRIY. Residues 142–153 show a composition bias toward low complexity; sequence APGSTGAGTTPG.

The protein belongs to the universal ribosomal protein uL3 family. Part of the 50S ribosomal subunit. Forms a cluster with proteins L14 and L19.

In terms of biological role, one of the primary rRNA binding proteins, it binds directly near the 3'-end of the 23S rRNA, where it nucleates assembly of the 50S subunit. The protein is Large ribosomal subunit protein uL3 of Acaryochloris marina (strain MBIC 11017).